We begin with the raw amino-acid sequence, 447 residues long: Asparagine--tRNA ligase (447 aa).

Belongs to the class-II aminoacyl-tRNA synthetase family. Homodimer.

Its subcellular location is the cytoplasm. The catalysed reaction is tRNA(Asn) + L-asparagine + ATP = L-asparaginyl-tRNA(Asn) + AMP + diphosphate + H(+). In Streptococcus pneumoniae (strain ATCC BAA-255 / R6), this protein is Asparagine--tRNA ligase.